Here is a 194-residue protein sequence, read N- to C-terminus: Large ribosomal subunit protein bL9 (194 aa).

The tract at residues 169 to 194 (DDINDNARPENFFDPNAEFDGGEDNA) is disordered.

The protein belongs to the bacterial ribosomal protein bL9 family.

Its function is as follows. Binds to the 23S rRNA. The chain is Large ribosomal subunit protein bL9 from Mesorhizobium japonicum (strain LMG 29417 / CECT 9101 / MAFF 303099) (Mesorhizobium loti (strain MAFF 303099)).